The chain runs to 279 residues: ESX-1 secretion-associated protein EspG1 (279 aa).

The protein belongs to the EspG family. Interacts specifically with ESX-1-dependent PE/PPE proteins.

It localises to the cytoplasm. In terms of biological role, specific chaperone for cognate PE/PPE proteins. Plays an important role in preventing aggregation of PE/PPE dimers. In Mycobacterium marinum (strain ATCC BAA-535 / M), this protein is ESX-1 secretion-associated protein EspG1.